Consider the following 118-residue polypeptide: Hydrogenase maturation factor HypA (118 aa).

A Ni(2+)-binding site is contributed by His-2. The Zn(2+) site is built by Cys-73, Cys-76, Cys-90, and Cys-93.

This sequence belongs to the HypA/HybF family.

Functionally, involved in the maturation of [NiFe] hydrogenases. Required for nickel insertion into the metal center of the hydrogenase. In Salmonella typhi, this protein is Hydrogenase maturation factor HypA.